The sequence spans 135 residues: UPF0355 protein MRSA252 (135 aa).

Belongs to the UPF0355 family.

This is UPF0355 protein MRSA252 from Staphylococcus aureus (strain MRSA252).